The primary structure comprises 75 residues: MPQLSRYSDEHVEQLLSELLSVLEKHKAPTDLSLMVLGNMVTNLINTSVAPAQRQAIANSFARALQSSISEDNAH.

Belongs to the UPF0352 family.

The chain is UPF0352 protein YejL from Salmonella agona (strain SL483).